The chain runs to 284 residues: 2-dehydro-3-deoxyphosphooctonate aldolase (284 aa).

Belongs to the KdsA family.

Its subcellular location is the cytoplasm. The enzyme catalyses D-arabinose 5-phosphate + phosphoenolpyruvate + H2O = 3-deoxy-alpha-D-manno-2-octulosonate-8-phosphate + phosphate. Its pathway is carbohydrate biosynthesis; 3-deoxy-D-manno-octulosonate biosynthesis; 3-deoxy-D-manno-octulosonate from D-ribulose 5-phosphate: step 2/3. It participates in bacterial outer membrane biogenesis; lipopolysaccharide biosynthesis. This chain is 2-dehydro-3-deoxyphosphooctonate aldolase, found in Cronobacter sakazakii (strain ATCC BAA-894) (Enterobacter sakazakii).